Here is a 640-residue protein sequence, read N- to C-terminus: Chaperone protein HtpG (640 aa).

The segment at 1 to 352 is a; substrate-binding; the sequence is MTEQTATQNY…SADLPLNVSR (352 aa). Positions 353–571 are b; the sequence is ELLQESRDVK…DGELSPQLIR (219 aa). The c stretch occupies residues 572 to 640; sequence MLKQAGQAVP…VKRINSLLLK (69 aa).

It belongs to the heat shock protein 90 family. Homodimer.

The protein localises to the cytoplasm. Functionally, molecular chaperone. Has ATPase activity. The protein is Chaperone protein HtpG of Acinetobacter baylyi (strain ATCC 33305 / BD413 / ADP1).